The sequence spans 1117 residues: Sodium-driven chloride bicarbonate exchanger (1117 aa).

Positions 1–14 (MQSGTCESFQSLSH) are enriched in polar residues. Disordered stretches follow at residues 1–26 (MQSG…VDRG), 57–94 (GRKS…FDTP), 244–312 (KQSE…PHQQ), and 456–475 (NGTA…GPEL). Residues 1-508 (MQSGTCESFQ…DFTDALSLQC (508 aa)) lie on the Cytoplasmic side of the membrane. A compositionally biased stretch (basic and acidic residues) spans 15–26 (QRNDEEAVVDRG). Basic residues predominate over residues 58-75 (RKSHRRHRHRGHKHRKRD). Residues 76-89 (RERDSGLEDGRESP) are compositionally biased toward basic and acidic residues. The residue at position 88 (serine 88) is a Phosphoserine. Threonine 93 carries the post-translational modification Phosphothreonine. The span at 247–263 (EPNSMDKNAGQVVSPQS) shows a compositional bias: polar residues. Serine 275 carries the post-translational modification Phosphoserine. Residues 509–529 (LASFLFLYCACMSPVITFGGL) traverse the membrane as a helical segment. Over 530-537 (LGEATEGR) the chain is Extracellular. The chain crosses the membrane as a helical span at residues 538–558 (ISAIESLFGASMTGIAYSLFG). At 559 to 561 (GQP) the chain is on the cytoplasmic side. A helical transmembrane segment spans residues 562 to 582 (LTILGSTGPVLVFEKILFKFC). Residues 583-595 (KEYGLSYLSLRAS) are Extracellular-facing. Residues 596–616 (IGLWTATLCIILVATDASSLV) traverse the membrane as a helical segment. Over 617–625 (CYITRFTEE) the chain is Cytoplasmic. The chain crosses the membrane as a helical span at residues 626–646 (AFASLICIIFIYEALEKLFEL). The Extracellular segment spans residues 647-719 (SEAYPINMHN…VGRACGHEHP (73 aa)). N-linked (GlcNAc...) asparagine glycans are attached at residues asparagine 673, asparagine 676, asparagine 686, and asparagine 696. Residues 720–740 (YVPDVLFWSVILFFSTVTLSA) traverse the membrane as a helical segment. Residues 741-761 (TLKQFKTSRYFPTKVRSIVSD) lie on the Cytoplasmic side of the membrane. Residues 762–782 (FAVFLTILCMVLIDYAIGIPS) form a helical membrane-spanning segment. The Extracellular segment spans residues 783–808 (PKLQVPSVFKPTRDDRGWFVTPLGPN). Residues 809 to 829 (PWWTVIAAIIPALLCTILIFM) traverse the membrane as a helical segment. Over 830-854 (DQQITAVIINRKEHKLKKGCGYHLD) the chain is Cytoplasmic. Residues 855-875 (LLMVAVMLGVCSIMGLPWFVA) traverse the membrane as a helical segment. The Extracellular portion of the chain corresponds to 876-911 (ATVLSITHVNSLKLESECSAPGEQPKFLGIREQRVT). Residues 912-932 (GLMIFILMGSSVFMTSILKFI) traverse the membrane as a helical segment. Over 933-934 (PM) the chain is Cytoplasmic. Residues 935–955 (PVLYGVFLYMGASSLKGIQFF) traverse the membrane as a helical segment. Topologically, residues 956–997 (DRIKLFWMPAKHQPDFIYLRHVPLRKVHLFTVIQMSCLGLLW) are extracellular. The chain crosses the membrane as a helical span at residues 998 to 1018 (IIKVSRAAIVFPMMVLALVFV). Residues 1019–1117 (RKLMDFLFTK…SSFPSKSSPS (99 aa)) lie on the Cytoplasmic side of the membrane. A phosphoserine mark is found at serine 1056 and serine 1084.

It belongs to the anion exchanger (TC 2.A.31) family. In terms of processing, N-glycosylated.

It localises to the basolateral cell membrane. It is found in the apical cell membrane. The protein localises to the cell projection. The protein resides in the dendrite. Its subcellular location is the axon. It localises to the perikaryon. It is found in the presynapse. The protein localises to the postsynapse. Functionally, sodium/bicarbonate cotransporter which plays an important role in regulating intracellular pH. Has been shown to act as a sodium/bicarbonate cotransporter in exchange for intracellular chloride. Has also been shown to act as a sodium/biocarbonate cotransporter which does not couple net influx of bicarbonate to net efflux of chloride, with the observed chloride efflux being due to chloride self-exchange. Controls neuronal pH and may contribute to the secretion of cerebrospinal fluid. Acting on presynaptic intracellular pH, it promotes GABA release, reduces the excitability of CA1 pyramidal neurons, and modulates short-term synaptic plasticity. Required in retinal cells to maintain normal pH which is necessary for normal vision. In the kidney, likely to mediate bicarbonate reclamation in the apical membrane of the proximal tubules. This chain is Sodium-driven chloride bicarbonate exchanger, found in Bos taurus (Bovine).